The sequence spans 372 residues: Glutamate 5-kinase (372 aa).

Residue K14 participates in ATP binding. Residues S54, D141, and N153 each contribute to the substrate site. An ATP-binding site is contributed by 173 to 174; the sequence is TD. The PUA domain maps to 280–358; that stretch reads RGHVVIDDGA…GEIESVLGYM (79 aa).

Belongs to the glutamate 5-kinase family.

The protein localises to the cytoplasm. The catalysed reaction is L-glutamate + ATP = L-glutamyl 5-phosphate + ADP. The protein operates within amino-acid biosynthesis; L-proline biosynthesis; L-glutamate 5-semialdehyde from L-glutamate: step 1/2. Its function is as follows. Catalyzes the transfer of a phosphate group to glutamate to form L-glutamate 5-phosphate. The protein is Glutamate 5-kinase of Paraburkholderia xenovorans (strain LB400).